The chain runs to 154 residues: Isotocin-neurophysin IT 1 (154 aa).

The N-terminal stretch at 1 to 20 is a signal peptide; the sequence is MSGSMFSVFSLLYLLSVCSA. A disulfide bridge links C21 with C26. Glycine amide is present on G29. 7 cysteine pairs are disulfide-bonded: C42–C86, C45–C59, C53–C76, C60–C66, C93–C105, C99–C117, and C106–C111.

It belongs to the vasopressin/oxytocin family.

Isotocin causes contraction of smooth muscles. In Catostomus commersonii (White sucker), this protein is Isotocin-neurophysin IT 1.